The sequence spans 265 residues: Orotidine 5'-phosphate decarboxylase (265 aa).

Residues D38, 60-62 (KTH), 92-101 (DRKFADIGKT), Y218, and R236 each bind substrate. Residue K94 is the Proton donor of the active site.

The protein belongs to the OMP decarboxylase family.

The catalysed reaction is orotidine 5'-phosphate + H(+) = UMP + CO2. The protein operates within pyrimidine metabolism; UMP biosynthesis via de novo pathway; UMP from orotate: step 2/2. This is Orotidine 5'-phosphate decarboxylase (URA3) from Cyberlindnera fabianii (Yeast).